The primary structure comprises 43 residues: Seed non-specific lipid transfer protein-like (43 aa).

The protein belongs to the plant LTP family. Homodimer.

Functionally, plant non-specific lipid-transfer proteins transfer phospholipids as well as galactolipids across membranes. May play a role in wax or cutin deposition in the cell walls of expanding epidermal cells and certain secretory tissues. This isoform inhibits the hyphal growth of several fungi in vitro. This chain is Seed non-specific lipid transfer protein-like, found in Raphanus sativus (Radish).